The chain runs to 606 residues: 4-hydroxy-3-methylbut-2-en-1-yl diphosphate synthase (flavodoxin) (606 aa).

[4Fe-4S] cluster is bound by residues Cys513, Cys516, Cys547, and Glu554.

It belongs to the IspG family. It depends on [4Fe-4S] cluster as a cofactor.

It carries out the reaction (2E)-4-hydroxy-3-methylbut-2-enyl diphosphate + oxidized [flavodoxin] + H2O + 2 H(+) = 2-C-methyl-D-erythritol 2,4-cyclic diphosphate + reduced [flavodoxin]. The protein operates within isoprenoid biosynthesis; isopentenyl diphosphate biosynthesis via DXP pathway; isopentenyl diphosphate from 1-deoxy-D-xylulose 5-phosphate: step 5/6. Functionally, converts 2C-methyl-D-erythritol 2,4-cyclodiphosphate (ME-2,4cPP) into 1-hydroxy-2-methyl-2-(E)-butenyl 4-diphosphate. The protein is 4-hydroxy-3-methylbut-2-en-1-yl diphosphate synthase (flavodoxin) of Chlamydia caviae (strain ATCC VR-813 / DSM 19441 / 03DC25 / GPIC) (Chlamydophila caviae).